The chain runs to 83 residues: Small ribosomal subunit protein bS16 (83 aa).

Belongs to the bacterial ribosomal protein bS16 family.

This is Small ribosomal subunit protein bS16 from Pseudomonas entomophila (strain L48).